A 544-amino-acid polypeptide reads, in one-letter code: Protein kinase dsk1 (544 aa).

In terms of domain architecture, Protein kinase spans 81–516; it reads YVVERKLGWG…AGYMSNSPWL (436 aa). Residues 87–95 and lysine 110 each bind ATP; that span reads LGWGHFSTV. Aspartate 214 functions as the Proton acceptor in the catalytic mechanism. Disordered stretches follow at residues 235 to 299 and 316 to 341; these read PATT…SSPF and ISLRDSQKHNSHPNSPFSSGDNSLIL. Over residues 237–254 the composition is skewed to low complexity; sequence TTSSPTSNTSSSKTRNNT. Polar residues-rich tracts occupy residues 281-299 and 327-337; these read KNPTKNSKPAGQVIPSSPF and HPNSPFSSGDN.

Belongs to the protein kinase superfamily. Ser/Thr protein kinase family. Post-translationally, phosphorylated on Ser residue(s).

It localises to the cytoplasm. The protein resides in the nucleus. It catalyses the reaction L-seryl-[protein] + ATP = O-phospho-L-seryl-[protein] + ADP + H(+). It carries out the reaction L-threonyl-[protein] + ATP = O-phospho-L-threonyl-[protein] + ADP + H(+). May play an important role in mitotic control by altering cellular location, degree of phosphorylation and kinase activity. Abundant expression accelerates the exit when cells are in M-phase and also delays the entry into mitosis when cells are in G2. Phosphorylates prp2 in vitro and so may have a role in co-ordinating pre-mRNA splicing with the progression of the cell division cycle. The chain is Protein kinase dsk1 (dsk1) from Schizosaccharomyces pombe (strain 972 / ATCC 24843) (Fission yeast).